Reading from the N-terminus, the 310-residue chain is Receptor homology region, transmembrane domain- and RING domain-containing protein 1 (310 aa).

The first 25 residues, methionine 1–alanine 25, serve as a signal peptide directing secretion. Residues threonine 26–threonine 168 are Lumenal-facing. A disulfide bridge links cysteine 65 with cysteine 92. Asparagine 75 carries an N-linked (GlcNAc...) asparagine glycan. Residues threonine 81–alanine 149 enclose the PA domain. A helical membrane pass occupies residues valine 169–phenylalanine 189. The Cytoplasmic portion of the chain corresponds to alanine 190 to arginine 310. The segment at cysteine 232–lysine 274 adopts an RING-type; atypical zinc-finger fold. Residues serine 284–arginine 293 are compositionally biased toward basic and acidic residues. The tract at residues serine 284 to arginine 310 is disordered. The span at threonine 294–arginine 310 shows a compositional bias: polar residues.

In terms of tissue distribution, expressed in leaves, stems, flowers and siliques.

Its subcellular location is the prevacuolar compartment membrane. The protein resides in the protein storage vacuole membrane. It localises to the golgi apparatus membrane. Functionally, involved in the trafficking of vacuolar proteins. Functions probably as a sorting receptor for protein trafficking to the protein storage vacuole (PSV) by binding the C-terminal vacuolar sorting determinant (VSD) of vacuolar-sorted proteins. This is Receptor homology region, transmembrane domain- and RING domain-containing protein 1 (RMR1) from Arabidopsis thaliana (Mouse-ear cress).